The primary structure comprises 557 residues: Potassium-transporting ATPase potassium-binding subunit (557 aa).

The next 12 helical transmembrane spans lie at Gly-5–Ser-25, Leu-63–Gly-83, Gly-132–Ile-152, Leu-170–Ile-190, Phe-253–Val-273, Leu-283–Val-303, Val-329–Ala-349, Ala-356–Val-376, Gly-379–Gly-399, Leu-416–Met-436, Leu-484–Ala-504, and Leu-526–Ala-546.

It belongs to the KdpA family. The system is composed of three essential subunits: KdpA, KdpB and KdpC.

The protein resides in the cell inner membrane. Functionally, part of the high-affinity ATP-driven potassium transport (or Kdp) system, which catalyzes the hydrolysis of ATP coupled with the electrogenic transport of potassium into the cytoplasm. This subunit binds the periplasmic potassium ions and delivers the ions to the membrane domain of KdpB through an intramembrane tunnel. This chain is Potassium-transporting ATPase potassium-binding subunit, found in Shigella flexneri.